The sequence spans 512 residues: Cytochrome P450 1A1 (512 aa).

The mitochondrial targeting signal stretch occupies residues S29–P40. O-linked (GlcNAc) serine glycosylation is present at S67. F224 is a substrate binding site. C457 contributes to the heme binding site.

This sequence belongs to the cytochrome P450 family. In terms of assembly, interacts with cytosolic chaperones HSP70 and HSP90; this interaction is required for initial targeting to mitochondria. Interacts (via mitochondrial targeting signal) with TOMM40 (via N-terminus); this interaction is required for translocation across the mitochondrial outer membrane. Requires heme as cofactor.

The protein localises to the endoplasmic reticulum membrane. It localises to the mitochondrion inner membrane. It is found in the microsome membrane. Its subcellular location is the cytoplasm. It catalyses the reaction an organic molecule + reduced [NADPH--hemoprotein reductase] + O2 = an alcohol + oxidized [NADPH--hemoprotein reductase] + H2O + H(+). The enzyme catalyses estrone + reduced [NADPH--hemoprotein reductase] + O2 = 2-hydroxyestrone + oxidized [NADPH--hemoprotein reductase] + H2O + H(+). It carries out the reaction estrone + reduced [NADPH--hemoprotein reductase] + O2 = 4-hydroxyestrone + oxidized [NADPH--hemoprotein reductase] + H2O + H(+). The catalysed reaction is estrone + reduced [NADPH--hemoprotein reductase] + O2 = 6alpha-hydroxyestrone + oxidized [NADPH--hemoprotein reductase] + H2O + H(+). It catalyses the reaction estrone + reduced [NADPH--hemoprotein reductase] + O2 = 15alpha-hydroxyestrone + oxidized [NADPH--hemoprotein reductase] + H2O + H(+). The enzyme catalyses estrone + reduced [NADPH--hemoprotein reductase] + O2 = 16alpha-hydroxyestrone + oxidized [NADPH--hemoprotein reductase] + H2O + H(+). It carries out the reaction 17beta-estradiol + reduced [NADPH--hemoprotein reductase] + O2 = 2-hydroxy-17beta-estradiol + oxidized [NADPH--hemoprotein reductase] + H2O + H(+). The catalysed reaction is 17beta-estradiol + reduced [NADPH--hemoprotein reductase] + O2 = 4-hydroxy-17beta-estradiol + oxidized [NADPH--hemoprotein reductase] + H2O + H(+). It catalyses the reaction 17beta-estradiol + reduced [NADPH--hemoprotein reductase] + O2 = 6alpha-hydroxy-17beta-estradiol + oxidized [NADPH--hemoprotein reductase] + H2O + H(+). The enzyme catalyses 17beta-estradiol + reduced [NADPH--hemoprotein reductase] + O2 = 7alpha-hydroxy-17beta-estradiol + oxidized [NADPH--hemoprotein reductase] + H2O + H(+). It carries out the reaction 17beta-estradiol + reduced [NADPH--hemoprotein reductase] + O2 = 15alpha-hydroxy-17beta-estradiol + oxidized [NADPH--hemoprotein reductase] + H2O + H(+). The catalysed reaction is (5Z,8Z,11Z)-eicosatrienoate + reduced [NADPH--hemoprotein reductase] + O2 = 19-hydroxy-(5Z,8Z,11Z)-eicosatrienoate + oxidized [NADPH--hemoprotein reductase] + H2O + H(+). It catalyses the reaction (5Z,8Z,11Z,14Z)-eicosatetraenoate + reduced [NADPH--hemoprotein reductase] + O2 = 16-hydroxy-(5Z,8Z,11Z,14Z)-eicosatetraenoate + oxidized [NADPH--hemoprotein reductase] + H2O + H(+). The enzyme catalyses (5Z,8Z,11Z,14Z)-eicosatetraenoate + reduced [NADPH--hemoprotein reductase] + O2 = 17-hydroxy-(5Z,8Z,11Z,14Z)-eicosatetraenoate + oxidized [NADPH--hemoprotein reductase] + H2O + H(+). It carries out the reaction (5Z,8Z,11Z,14Z)-eicosatetraenoate + reduced [NADPH--hemoprotein reductase] + O2 = 18-hydroxy-(5Z,8Z,11Z,14Z)-eicosatetraenoate + oxidized [NADPH--hemoprotein reductase] + H2O + H(+). The catalysed reaction is (5Z,8Z,11Z,14Z)-eicosatetraenoate + reduced [NADPH--hemoprotein reductase] + O2 = 19-hydroxy-(5Z,8Z,11Z,14Z)-eicosatetraenoate + oxidized [NADPH--hemoprotein reductase] + H2O + H(+). It catalyses the reaction (5Z,8Z,11Z,14Z,17Z)-eicosapentaenoate + reduced [NADPH--hemoprotein reductase] + O2 = 19-hydroxy-(5Z,8Z,11Z,14Z,17Z)-eicosapentaenoate + oxidized [NADPH--hemoprotein reductase] + H2O + H(+). The enzyme catalyses (5Z,8Z,11Z,14Z)-eicosatetraenoate + reduced [NADPH--hemoprotein reductase] + O2 = (8R,9S)-epoxy-(5Z,11Z,14Z)-eicosatrienoate + oxidized [NADPH--hemoprotein reductase] + H2O + H(+). It carries out the reaction (5Z,8Z,11Z,14Z)-eicosatetraenoate + reduced [NADPH--hemoprotein reductase] + O2 = (11R,12S)-epoxy-(5Z,8Z,14Z)-eicosatrienoate + oxidized [NADPH--hemoprotein reductase] + H2O + H(+). The catalysed reaction is (5Z,8Z,11Z,14Z)-eicosatetraenoate + reduced [NADPH--hemoprotein reductase] + O2 = (14S,15R)-epoxy-(5Z,8Z,11Z)-eicosatrienoate + oxidized [NADPH--hemoprotein reductase] + H2O + H(+). It catalyses the reaction (5Z,8Z,11Z,14Z)-eicosatetraenoate + reduced [NADPH--hemoprotein reductase] + O2 = (14R,15S)-epoxy-(5Z,8Z,11Z)-eicosatrienoate + oxidized [NADPH--hemoprotein reductase] + H2O + H(+). The enzyme catalyses (5Z,8Z,11Z,14Z,17Z)-eicosapentaenoate + reduced [NADPH--hemoprotein reductase] + O2 = (17R,18S)-epoxy-(5Z,8Z,11Z,14Z)-eicosatetraenoate + oxidized [NADPH--hemoprotein reductase] + H2O + H(+). It carries out the reaction (4Z,7Z,10Z,13Z,16Z,19Z)-docosahexaenoate + reduced [NADPH--hemoprotein reductase] + O2 = (19S,20R)-epoxy-(4Z,7Z,10Z,13Z,16Z)-docosapentaenoate + oxidized [NADPH--hemoprotein reductase] + H2O + H(+). The catalysed reaction is (4Z,7Z,10Z,13Z,16Z,19Z)-docosahexaenoate + reduced [NADPH--hemoprotein reductase] + O2 = (19R,20S)-epoxy-(4Z,7Z,10Z,13Z,16Z)-docosapentaenoate + oxidized [NADPH--hemoprotein reductase] + H2O + H(+). It catalyses the reaction all-trans-retinol + reduced [NADPH--hemoprotein reductase] + O2 = all-trans-retinal + oxidized [NADPH--hemoprotein reductase] + 2 H2O + H(+). The enzyme catalyses all-trans-retinal + reduced [NADPH--hemoprotein reductase] + O2 = all-trans-retinoate + oxidized [NADPH--hemoprotein reductase] + H2O + 2 H(+). It carries out the reaction (13S)-hydroperoxy-(9Z,11E)-octadecadienoate = 13-oxo-(9Z,11E)-octadecadienoate + H2O. The catalysed reaction is (12S)-hydroperoxy-(5Z,8Z,10E,14Z)-eicosatetraenoate = 12-oxo-(5Z,8Z,10E,14Z)-eicosatetraenoate + H2O. It catalyses the reaction (15S)-hydroperoxy-(5Z,8Z,11Z,13E)-eicosatetraenoate = 15-oxo-(5Z,8Z,11Z,13E)-eicosatetraenoate + H2O. The enzyme catalyses (5S)-hydroperoxy-(6E,8Z,11Z,14Z)-eicosatetraenoate = 5-oxo-(6E,8Z,11Z,14Z)-eicosatetraenoate + H2O. It functions in the pathway steroid hormone biosynthesis. It participates in lipid metabolism; fatty acid metabolism. The protein operates within cofactor metabolism; retinol metabolism. In terms of biological role, a cytochrome P450 monooxygenase involved in the metabolism of various endogenous substrates, including fatty acids, steroid hormones and vitamins. Mechanistically, uses molecular oxygen inserting one oxygen atom into a substrate, and reducing the second into a water molecule, with two electrons provided by NADPH via cytochrome P450 reductase (CPR; NADPH-ferrihemoprotein reductase). Catalyzes the hydroxylation of carbon-hydrogen bonds. Exhibits high catalytic activity for the formation of hydroxyestrogens from estrone (E1) and 17beta-estradiol (E2), namely 2-hydroxy E1 and E2, as well as D-ring hydroxylated E1 and E2 at the C15alpha and C16alpha positions. Displays different regioselectivities for polyunsaturated fatty acids (PUFA) hydroxylation. Catalyzes the epoxidation of double bonds of certain PUFA. Converts arachidonic acid toward epoxyeicosatrienoic acid (EET) regioisomers, 8,9-, 11,12-, and 14,15-EET, that function as lipid mediators in the vascular system. Displays an absolute stereoselectivity in the epoxidation of eicosapentaenoic acid (EPA) producing the 17(R),18(S) enantiomer. May play an important role in all-trans retinoic acid biosynthesis in extrahepatic tissues. Catalyzes two successive oxidative transformation of all-trans retinol to all-trans retinal and then to the active form all-trans retinoic acid. May also participate in eicosanoids metabolism by converting hydroperoxide species into oxo metabolites (lipoxygenase-like reaction, NADPH-independent). In Macaca mulatta (Rhesus macaque), this protein is Cytochrome P450 1A1 (CYP1A1).